A 101-amino-acid polypeptide reads, in one-letter code: Large ribosomal subunit protein eL30 (101 aa).

This sequence belongs to the eukaryotic ribosomal protein eL30 family.

This chain is Large ribosomal subunit protein eL30 (rpl30e), found in Thermococcus celer.